The sequence spans 240 residues: Serine protease SplB (240 aa).

An N-terminal signal peptide occupies residues Met-1 to Ala-36. Active-site charge relay system residues include His-75, Asp-113, and Ser-193.

The protein belongs to the peptidase S1B family.

The protein resides in the secreted. Its function is as follows. Serine protease that cleaves specifically after the sequence Trp-Glu-Leu-Gln. This Staphylococcus aureus (strain Mu3 / ATCC 700698) protein is Serine protease SplB (splB).